The primary structure comprises 195 residues: Nucleoside triphosphate pyrophosphatase (195 aa).

The active-site Proton acceptor is D76.

The protein belongs to the Maf family. A divalent metal cation is required as a cofactor.

The protein localises to the cytoplasm. It catalyses the reaction a ribonucleoside 5'-triphosphate + H2O = a ribonucleoside 5'-phosphate + diphosphate + H(+). It carries out the reaction a 2'-deoxyribonucleoside 5'-triphosphate + H2O = a 2'-deoxyribonucleoside 5'-phosphate + diphosphate + H(+). Its function is as follows. Nucleoside triphosphate pyrophosphatase. May have a dual role in cell division arrest and in preventing the incorporation of modified nucleotides into cellular nucleic acids. In Pelagibacter ubique (strain HTCC1062), this protein is Nucleoside triphosphate pyrophosphatase.